Here is a 221-residue protein sequence, read N- to C-terminus: MNNAEILKHVDHTLLKPVATWDDIKKICDESIEYNTASICIPACYISRIHATYGDKVNICTVVGFPLGYSSTEGKIAETKQALADGANEIDMVINISDVKNKAYDKVTEEIRALKEVVGNKILKVIIETCYLTEEEKIAMCKAVTEAGADYIKTSTGFGTGGATLEDIKLFKKHIGPNVKIKAAGGVSTVEDLNMFINEGCDRLGTSRAVGLLKGEETQGY.

D91 functions as the Proton donor/acceptor in the catalytic mechanism. K153 acts as the Schiff-base intermediate with acetaldehyde in catalysis. K182 functions as the Proton donor/acceptor in the catalytic mechanism.

The protein belongs to the DeoC/FbaB aldolase family. DeoC type 1 subfamily.

It is found in the cytoplasm. It catalyses the reaction 2-deoxy-D-ribose 5-phosphate = D-glyceraldehyde 3-phosphate + acetaldehyde. It participates in carbohydrate degradation; 2-deoxy-D-ribose 1-phosphate degradation; D-glyceraldehyde 3-phosphate and acetaldehyde from 2-deoxy-alpha-D-ribose 1-phosphate: step 2/2. In terms of biological role, catalyzes a reversible aldol reaction between acetaldehyde and D-glyceraldehyde 3-phosphate to generate 2-deoxy-D-ribose 5-phosphate. The protein is Deoxyribose-phosphate aldolase of Clostridium botulinum (strain Eklund 17B / Type B).